A 441-amino-acid chain; its full sequence is Trigger factor (441 aa).

The PPIase FKBP-type domain occupies 175–257 (GDFISLSLHV…VNAVIEVVAP (83 aa)).

This sequence belongs to the FKBP-type PPIase family. Tig subfamily.

It localises to the cytoplasm. The catalysed reaction is [protein]-peptidylproline (omega=180) = [protein]-peptidylproline (omega=0). Functionally, involved in protein export. Acts as a chaperone by maintaining the newly synthesized protein in an open conformation. Functions as a peptidyl-prolyl cis-trans isomerase. This Chlamydia abortus (strain DSM 27085 / S26/3) (Chlamydophila abortus) protein is Trigger factor.